The following is a 447-amino-acid chain: C4-dicarboxylate transport protein (447 aa).

10 consecutive transmembrane segments (helical) span residues His-21–Pro-41, Leu-57–Met-77, Ile-92–Val-112, Ser-141–Gly-161, Ile-163–Ala-183, Leu-201–Val-221, Leu-232–Gly-252, Ile-320–Gly-340, Leu-345–Val-365, and Ala-368–Val-388.

It belongs to the dicarboxylate/amino acid:cation symporter (DAACS) (TC 2.A.23) family.

It localises to the cell inner membrane. In terms of biological role, responsible for the transport of dicarboxylates such as succinate, fumarate, and malate from the periplasm across the membrane. This is C4-dicarboxylate transport protein from Granulibacter bethesdensis (strain ATCC BAA-1260 / CGDNIH1).